The following is a 422-amino-acid chain: 5-hydroxytryptamine receptor 1A (422 aa).

The disordered stretch occupies residues 1-23 (MDVLSPGQGNNTTSPPAPFETGG). The Extracellular portion of the chain corresponds to 1 to 38 (MDVLSPGQGNNTTSPPAPFETGGNTTGISDVTFSYQVI). N-linked (GlcNAc...) asparagine glycosylation is found at asparagine 10, asparagine 11, and asparagine 24. Residues 39–59 (TSLLLGTLIFCAVLGNACVVA) form a helical membrane-spanning segment. The Cytoplasmic segment spans residues 60-73 (AIALERSLQNVANY). The chain crosses the membrane as a helical span at residues 74–98 (LIGSLAVTDLMVSVLVLPMAALYQV). The Extracellular segment spans residues 99–107 (LNKWTLGQV). Residues 108-132 (TCDLFIALDVLCCTSSILHLCAIAL) traverse the membrane as a helical segment. A disulfide bridge connects residues cysteine 109 and cysteine 187. 2 residues coordinate serotonin: aspartate 116 and cysteine 120. The DRY motif; important for ligand-induced conformation changes signature appears at 133–135 (DRY). Topologically, residues 133-152 (DRYWAITDPIDYVNKRTPRR) are cytoplasmic. A helical membrane pass occupies residues 153-174 (AAALISLTWLIGFLISIPPMLG). Topologically, residues 175 to 193 (WRTPEDRSDPDACTISKDH) are extracellular. The helical transmembrane segment at 194-216 (GYTIYSTFGAFYIPLLLMLVLYG) threads the bilayer. Residues 217 to 346 (RIFRAARFRI…LARERKTVKT (130 aa)) lie on the Cytoplasmic side of the membrane. Positions 235–263 (KTGADTHHGASPAPQPKKSVNGESGSRNW) are disordered. Threonine 314, lysine 345, threonine 346, and glycine 352 together coordinate 1D-myo-inositol 4-phosphate. A helical membrane pass occupies residues 347–370 (LGIIMGTFILCWLPFFIVALVLPF). At 371 to 378 (CESSCHMP) the chain is on the extracellular side. The helical transmembrane segment at 379–403 (TLLGAIINWLGYSNSLLNPVIYAYF) threads the bilayer. An NPxxY motif; important for ligand-induced conformation changes and signaling motif is present at residues 396–400 (NPVIY). 3 residues coordinate 1D-myo-inositol 4-phosphate: phenylalanine 403, asparagine 404, and lysine 405. Residues 404–422 (NKDFQNAFKKIIKCKFCRQ) are Cytoplasmic-facing.

This sequence belongs to the G-protein coupled receptor 1 family. 5-hydroxytryptamine receptor subfamily. HTR1A sub-subfamily. As to quaternary structure, heterodimer; heterodimerizes with GPER1. Interacts with YIF1B. Interacts with GPR39 and GALR1.

The protein resides in the cell membrane. It localises to the cell projection. It is found in the dendrite. With respect to regulation, G-protein coupled receptor activity is regulated by lipids: phosphatidylinositol 4-phosphate increases HTR1A-mediated activity. Its function is as follows. G-protein coupled receptor for 5-hydroxytryptamine (serotonin). Also functions as a receptor for various drugs and psychoactive substances. Ligand binding causes a conformation change that triggers signaling via guanine nucleotide-binding proteins (G proteins) and modulates the activity of downstream effectors, such as adenylate cyclase. HTR1A is coupled to G(i)/G(o) G alpha proteins and mediates inhibitory neurotransmission: signaling inhibits adenylate cyclase activity and activates a phosphatidylinositol-calcium second messenger system that regulates the release of Ca(2+) ions from intracellular stores. Beta-arrestin family members regulate signaling by mediating both receptor desensitization and resensitization processes. This is 5-hydroxytryptamine receptor 1A (HTR1A) from Pongo pygmaeus (Bornean orangutan).